A 266-amino-acid chain; its full sequence is Translation initiation factor 2 subunit alpha (266 aa).

One can recognise an S1 motif domain in the interval 12-83 (GEILIATVKQ…RKGTVDVSLK (72 aa)).

This sequence belongs to the eIF-2-alpha family. In terms of assembly, heterotrimer composed of an alpha, a beta and a gamma chain.

In terms of biological role, eIF-2 functions in the early steps of protein synthesis by forming a ternary complex with GTP and initiator tRNA. In Saccharolobus islandicus (strain L.S.2.15 / Lassen #1) (Sulfolobus islandicus), this protein is Translation initiation factor 2 subunit alpha.